Consider the following 686-residue polypeptide: Aminodeoxychorismate synthase (686 aa).

In terms of domain architecture, Glutamine amidotransferase type-1 spans 2-194 (RTLLIDNYDS…RDLALAHHRA (193 aa)). Catalysis depends on Cys-81, which acts as the Nucleophile. Active-site residues include His-168 and Glu-170. The interval 233 to 686 (LDSSSVLEGA…LDGSAVAGAR (454 aa)) is PABB component.

This sequence in the C-terminal section; belongs to the anthranilate synthase component I family.

The catalysed reaction is chorismate + L-glutamine = 4-amino-4-deoxychorismate + L-glutamate. Its pathway is antibiotic biosynthesis. Functionally, involved in chloramphenicol biosynthesis. Catalyzes the biosynthesis of 4-amino-4-deoxychorismate (ADC) from chorismate and glutamine. This Streptomyces venezuelae (strain ATCC 10712 / CBS 650.69 / DSM 40230 / JCM 4526 / NBRC 13096 / PD 04745) protein is Aminodeoxychorismate synthase.